The chain runs to 292 residues: NAD kinase (292 aa).

The active-site Proton acceptor is the aspartate 72. NAD(+) contacts are provided by residues 72–73, 146–147, histidine 157, arginine 174, aspartate 176, and 187–192; these read DG, NE, and TAYSLS.

Belongs to the NAD kinase family. The cofactor is a divalent metal cation.

The protein localises to the cytoplasm. It catalyses the reaction NAD(+) + ATP = ADP + NADP(+) + H(+). Involved in the regulation of the intracellular balance of NAD and NADP, and is a key enzyme in the biosynthesis of NADP. Catalyzes specifically the phosphorylation on 2'-hydroxyl of the adenosine moiety of NAD to yield NADP. The protein is NAD kinase of Shewanella loihica (strain ATCC BAA-1088 / PV-4).